Here is a 338-residue protein sequence, read N- to C-terminus: L-serine dehydratase (338 aa).

At K39 the chain carries N6-(pyridoxal phosphate)lysine.

The protein belongs to the serine/threonine dehydratase family. Pyridoxal 5'-phosphate is required as a cofactor.

It is found in the cytoplasm. It catalyses the reaction L-serine = pyruvate + NH4(+). Its pathway is carbohydrate biosynthesis; gluconeogenesis. In Saccharomyces cerevisiae (strain RM11-1a) (Baker's yeast), this protein is L-serine dehydratase (SDL1).